The following is a 52-amino-acid chain: Conotoxin Cal6.3b (52 aa).

Residues 1-4 (KKKR) constitute a propeptide that is removed on maturation. 3 disulfide bridges follow: C12–C23, C15–C27, and C22–C30. A Glutamine amide modification is found at Q50.

In terms of tissue distribution, expressed by the venom duct.

The protein localises to the secreted. Its function is as follows. Probable neurotoxin with unknown target. Possibly targets ion channels. The protein is Conotoxin Cal6.3b of Californiconus californicus (California cone).